A 283-amino-acid polypeptide reads, in one-letter code: Light-independent protochlorophyllide reductase iron-sulfur ATP-binding protein (283 aa).

ATP contacts are provided by residues 15–20 and Lys44; that span reads GIGKST. Ser19 serves as a coordination point for Mg(2+). Positions 100 and 134 each coordinate [4Fe-4S] cluster. 185–186 contacts ATP; it reads NR.

The protein belongs to the NifH/BchL/ChlL family. Homodimer. Protochlorophyllide reductase is composed of three subunits; ChlL, ChlN and ChlB. [4Fe-4S] cluster serves as cofactor.

The catalysed reaction is chlorophyllide a + oxidized 2[4Fe-4S]-[ferredoxin] + 2 ADP + 2 phosphate = protochlorophyllide a + reduced 2[4Fe-4S]-[ferredoxin] + 2 ATP + 2 H2O. The protein operates within porphyrin-containing compound metabolism; chlorophyll biosynthesis (light-independent). Its function is as follows. Component of the dark-operative protochlorophyllide reductase (DPOR) that uses Mg-ATP and reduced ferredoxin to reduce ring D of protochlorophyllide (Pchlide) to form chlorophyllide a (Chlide). This reaction is light-independent. The L component serves as a unique electron donor to the NB-component of the complex, and binds Mg-ATP. This is Light-independent protochlorophyllide reductase iron-sulfur ATP-binding protein from Synechococcus sp. (strain JA-3-3Ab) (Cyanobacteria bacterium Yellowstone A-Prime).